Consider the following 1964-residue polypeptide: Probable helicase with zinc finger domain (1964 aa).

A C3H1-type zinc finger spans residues 178–206 (SEEYTLCKRFLEQGICRYGAQCTSAHSQE). Phosphoserine is present on serine 248. 668–675 (GPYGTGKT) is an ATP binding site. Residues 794–797 (DEAA) carry the DEAA box motif. Over residues 1116–1127 (HSGNSSRQQQSP) the composition is skewed to polar residues. The interval 1116 to 1135 (HSGNSSRQQQSPPKVKSLYH) is disordered. Threonine 1163 bears the Phosphothreonine mark. Residue arginine 1245 is modified to Omega-N-methylarginine. 6 disordered regions span residues 1248–1350 (PIPY…LPAP), 1360–1379 (HFHP…QPHT), 1388–1449 (LPEQ…QAGP), 1463–1491 (QSPA…RAIT), 1631–1655 (QVQP…QFAN), and 1743–1964 (QHAA…SYFK). 2 stretches are compositionally biased toward basic and acidic residues: residues 1268 to 1281 (HAEK…RNGK) and 1292 to 1308 (NKIR…KQVD). The span at 1365 to 1374 (PQLPRPPFPA) shows a compositional bias: pro residues. The span at 1388–1431 (LPEQPNQMAPQPNQVAPQPNQMTPQPNQVAPQPNQVVQQQSQAP) shows a compositional bias: low complexity. Over residues 1635 to 1644 (RSPPAVPSPP) the composition is skewed to pro residues. Phosphoserine is present on residues serine 1636, serine 1760, serine 1763, and serine 1788. Positions 1755-1765 (SSRTVSASSLP) are enriched in polar residues. Composition is skewed to polar residues over residues 1799–1813 (PQDS…QGHS) and 1826–1849 (WANT…TSQP). Over residues 1860–1870 (KPPEDQLKPES) the composition is skewed to basic and acidic residues. Polar residues-rich tracts occupy residues 1872 to 1881 (EVSSSFNYSM) and 1897 to 1910 (IAES…QSPA). A compositionally biased stretch (low complexity) spans 1941-1956 (PLSLLQELSLGSSPGS).

It belongs to the DNA2/NAM7 helicase family. Interacts with POLR2A. Interacts with SMYD3; the interaction may bridge SMYD3 and RNA polymerase II. Interacts with SMYD2.

It is found in the nucleus. Functionally, may act as a helicase that plays a role in RNA metabolism in multiple tissues and organs within the developing embryo. In Mus musculus (Mouse), this protein is Probable helicase with zinc finger domain (Helz).